The sequence spans 299 residues: Glutamyl-Q tRNA(Asp) synthetase (299 aa).

Residues 9–13 and Glu-45 contribute to the L-glutamate site; that span reads RFAPS. Residues 12–22 carry the 'HIGH' region motif; that stretch reads PSPTGPLHFGS. 3 residues coordinate Zn(2+): Cys-101, Cys-103, and Cys-118. Tyr-170 and Arg-188 together coordinate L-glutamate. The 'KMSKS' region motif lies at 226–230; it reads KLSKS. Lys-229 provides a ligand contact to ATP.

This sequence belongs to the class-I aminoacyl-tRNA synthetase family. GluQ subfamily. Zn(2+) is required as a cofactor.

Its function is as follows. Catalyzes the tRNA-independent activation of glutamate in presence of ATP and the subsequent transfer of glutamate onto a tRNA(Asp). Glutamate is transferred on the 2-amino-5-(4,5-dihydroxy-2-cyclopenten-1-yl) moiety of the queuosine in the wobble position of the QUC anticodon. The sequence is that of Glutamyl-Q tRNA(Asp) synthetase from Xanthomonas axonopodis pv. citri (strain 306).